We begin with the raw amino-acid sequence, 168 residues long: 6,7-dimethyl-8-ribityllumazine synthase (168 aa).

5-amino-6-(D-ribitylamino)uracil contacts are provided by residues Trp31, 65–67 (SFE), and 89–91 (CVV). Residue 94-95 (DT) participates in (2S)-2-hydroxy-3-oxobutyl phosphate binding. The active-site Proton donor is the His97. Residue Tyr122 coordinates 5-amino-6-(D-ribitylamino)uracil. Arg136 is a (2S)-2-hydroxy-3-oxobutyl phosphate binding site.

It belongs to the DMRL synthase family.

It catalyses the reaction (2S)-2-hydroxy-3-oxobutyl phosphate + 5-amino-6-(D-ribitylamino)uracil = 6,7-dimethyl-8-(1-D-ribityl)lumazine + phosphate + 2 H2O + H(+). It participates in cofactor biosynthesis; riboflavin biosynthesis; riboflavin from 2-hydroxy-3-oxobutyl phosphate and 5-amino-6-(D-ribitylamino)uracil: step 1/2. Functionally, catalyzes the formation of 6,7-dimethyl-8-ribityllumazine by condensation of 5-amino-6-(D-ribitylamino)uracil with 3,4-dihydroxy-2-butanone 4-phosphate. This is the penultimate step in the biosynthesis of riboflavin. The polypeptide is 6,7-dimethyl-8-ribityllumazine synthase (Phocaeicola vulgatus (strain ATCC 8482 / DSM 1447 / JCM 5826 / CCUG 4940 / NBRC 14291 / NCTC 11154) (Bacteroides vulgatus)).